The chain runs to 568 residues: Natural resistance-associated macrophage protein 2 (568 aa).

Positions 1-20 (MVLDPEEKIPDDGASGDHGD) are enriched in basic and acidic residues. The interval 1-45 (MVLDPEEKIPDDGASGDHGDSASLGAINPAYSNSSLPHSTGDSEE) is disordered. At 1-69 (MVLDPEEKIP…EEYSCFSFRK (69 aa)) the chain is on the cytoplasmic side. Over residues 30–40 (AYSNSSLPHST) the composition is skewed to polar residues. The chain crosses the membrane as a helical span at residues 70–90 (LWAFTGPGFLMSIAYLDPGNI). Residues 91 to 95 (ESDLQ) are Extracellular-facing. A helical transmembrane segment spans residues 96–117 (SGAVAGFKLLWVLLLATIVGLL). At 118-154 (LQRLAARLGVVTGLHLAEVCHRQYPKVPRIILWLMVE) the chain is on the cytoplasmic side. Residues 155–175 (LAIIGSDMQEVIGSAIAINLL) form a helical membrane-spanning segment. At 176 to 179 (SAGR) the chain is on the extracellular side. Residues 180–194 (VPLYGGVLITIADTF) form a helical membrane-spanning segment. At 195-208 (VFLFLDKYGLRKLE) the chain is on the cytoplasmic side. A helical transmembrane segment spans residues 209–229 (AFFGFLITIMALTFGYEYVTV). Topologically, residues 230 to 255 (KPSQSQVLRGMFVPSCSGCHTPQVEQ) are extracellular. The chain crosses the membrane as a helical span at residues 256–276 (AVGIVGAVIMPHNMYLHSALV). At 277–301 (KSRQVNRANKQEVREANKYFFIESC) the chain is on the cytoplasmic side. The chain crosses the membrane as a helical span at residues 302–322 (IALFVSFIINVFVVSVFAEAF). Over 323-360 (FEKTNEQVVEVCRNSSSPHADLFPNDNSTLAVDIYKGG) the chain is Extracellular. 2 N-linked (GlcNAc...) asparagine glycosylation sites follow: Asn-336 and Asn-349. The chain crosses the membrane as a helical span at residues 361–381 (VVLGCYFGPAALYIWAVGILA). The Cytoplasmic portion of the chain corresponds to 382 to 408 (AGQSSTMTGTYSGQFVMEGFLNLKWSR). The chain crosses the membrane as a helical span at residues 409–429 (FARVILTRSIAIIPTLLVAVF). Residues 430–440 (QDVEHLTGMND) are Extracellular-facing. The helical transmembrane segment at 441–461 (FLNVLQSLQLPFALIPILTFT) threads the bilayer. The Cytoplasmic segment spans residues 462–482 (SLRPVMSEFSNGIGWRIAGGI). Residues 483 to 503 (LVLLVCSINMYFVVVYVQELG) form a helical membrane-spanning segment. Residues 504-506 (HVA) lie on the Extracellular side of the membrane. A helical transmembrane segment spans residues 507–527 (LYVVAAVVSVAYLGFVFYLGW). The Cytoplasmic segment spans residues 528-568 (QCLIALGLSFLDCGRSYHLGLTARPEIYLLNTVDAVSLVSR). The segment at 555-559 (YLLNT) is required for early endosome targeting. Leu-556, Ser-564, and Ser-567 each carry phosphoserine.

Belongs to the NRAMP family. In terms of assembly, forms a complex with NDFIP1 and NEDD4L, in cortical neurons, in response to iron and cobalt exposure; this interaction leads to SLC11A2 ubiquitination by NEDD4L and proteasome-dependent degradation. Interacts with NDFIP1, NDFIP2 and WWP2; this interaction leads to SLC11A2 ubiquitination by WWP2 and subsequent proteasome-dependent degradation. Interacts with COX2 and TOM6 at the outer mitochondrion membrane. Interacts with ARRDC1; this interaction regulates the incorporation of SLC11A2 into extracellular vesicles through an ubiquitination-dependent mechanism. Interacts with ARRDC4; controls the incorporation of SLC11A2 into extracellular vesicles through an ubiquitination-dependent mechanism. In terms of processing, ubiquitinated by WWP2. Post-translationally, N-glycosylated. As to expression, ubiquitous. In terms of tissue distribution, expressed in proximal intestine, kidney and brain.

The protein localises to the golgi apparatus. It localises to the trans-Golgi network membrane. Its subcellular location is the early endosome membrane. The protein resides in the recycling endosome membrane. It is found in the late endosome membrane. The protein localises to the lysosome membrane. It localises to the apical cell membrane. Its subcellular location is the mitochondrion outer membrane. The protein resides in the extracellular vesicle membrane. It catalyses the reaction Fe(2+)(in) + H(+)(in) = Fe(2+)(out) + H(+)(out). It carries out the reaction Cd(2+)(out) + H(+)(out) = Cd(2+)(in) + H(+)(in). The enzyme catalyses Co(2+)(out) + H(+)(out) = Co(2+)(in) + H(+)(in). The catalysed reaction is Mn(2+)(in) + H(+)(in) = Mn(2+)(out) + H(+)(out). It catalyses the reaction Zn(2+)(out) + H(+)(out) = Zn(2+)(in) + H(+)(in). It carries out the reaction Ni(2+)(out) + H(+)(out) = Ni(2+)(in) + H(+)(in). The enzyme catalyses H(+)(in) = H(+)(out). The catalysed reaction is Fe(2+)(in) = Fe(2+)(out). With respect to regulation, inhibited by 2-(3-carbamimidoylsulfanylmethyl-benzyl)-isothiourea. In terms of biological role, proton-coupled metal ion symporter operating with a proton to metal ion stoichiometry of 1:1. Selectively transports various divalent metal cations, in decreasing affinity: Cd(2+) &gt; Fe(2+) &gt; Co(2+), Mn(2+) &gt;&gt; Zn(2+), Ni(2+), VO(2+). Essential for maintenance of iron homeostasis by modulating intestinal absorption of dietary Fe(2+) and TF-associated endosomal Fe(2+) transport in erythroid precursors and other cells. Enables Fe(2+) and Mn(2+) ion entry into mitochondria, and is thus expected to promote mitochondrial heme synthesis, iron-sulfur cluster biogenesis and antioxidant defense. Can mediate uncoupled fluxes of either protons or metal ions. The polypeptide is Natural resistance-associated macrophage protein 2 (Slc11a2) (Rattus norvegicus (Rat)).